The primary structure comprises 183 residues: UPF0316 protein EF_1609 (183 aa).

The next 3 helical transmembrane spans lie at 1–21 (MVVD…YITL), 35–55 (VIAP…LSMV), and 62–82 (PLNL…GIKI).

It belongs to the UPF0316 family.

It is found in the cell membrane. This is UPF0316 protein EF_1609 from Enterococcus faecalis (strain ATCC 700802 / V583).